The sequence spans 648 residues: MTPLLELKDIRRSYPAGDEQVEVLKGISLNIYAGEMVAIVGASGSGKSTLMNILGCLDKATSGTYRVAGQDIATLDADALAQLRREHFGFIFQRYHLLPHLTVEQNVEVPAVYAGLERKQRLLRAQELLQRLGLEDRTEYYPAQLSGGQQQRVSIARALMNGGQVILADEPTGALDSHSGEEVMAILHQLRDRGHTVIIVTHDPQVAAQAERVIEIRDGEIVRNPPAIEKVNVAGGTEPVVNTVSGWRQFVSGFNEALTMAWRALAANKMRTLLTMLGIIIGIASVVSIVVVGDAAKQMVLADIRSIGTNTIDVYPGKDFGDDDPQYQQALKYDDLIAIQKQPWVASATPAVSQNLRLRYNNVDVAASANGVSGDYFNVYGMTFSEGNTFNQEQLNGRAQVVVLDSNTRRQLFPHKADVVGEVILVGNMPARVIGVAEEKQSMFGSSKVLRVWLPYSTMSGRVMGQSWLNSITVRVKEGFDSAEAEQQLTRLLSLRHGKKDFFTWNMDGVLKTVEKTTRTLQLFLTLVAVISLVVGGIGVMNIMLVSVTERTREIGIRMAVGARASDVLQQFLIEAVLVCLVGGALGITLSLLIAFTLQLFLPGWEIGFSPLALLLAFLCSTATGILFGWLPARNAARLDPVDALARE.

Positions 5 to 243 (LELKDIRRSY…AGGTEPVVNT (239 aa)) constitute an ABC transporter domain. An ATP-binding site is contributed by 41 to 48 (GASGSGKS). Helical transmembrane passes span 273 to 293 (LLTMLGIIIGIASVVSIVVVG), 523 to 543 (LFLTLVAVISLVVGGIGVMNI), 576 to 596 (AVLVCLVGGALGITLSLLIAF), and 600 to 620 (LFLPGWEIGFSPLALLLAFLC).

Belongs to the ABC transporter superfamily. Macrolide exporter (TC 3.A.1.122) family. Homodimer. Part of the tripartite efflux system MacAB-TolC, which is composed of an inner membrane transporter, MacB, a periplasmic membrane fusion protein, MacA, and an outer membrane component, TolC. The complex forms a large protein conduit and can translocate molecules across both the inner and outer membranes. Interacts with MacA.

The protein resides in the cell inner membrane. Part of the tripartite efflux system MacAB-TolC. MacB is a non-canonical ABC transporter that contains transmembrane domains (TMD), which form a pore in the inner membrane, and an ATP-binding domain (NBD), which is responsible for energy generation. Confers resistance against macrolides. The chain is Macrolide export ATP-binding/permease protein MacB from Shigella flexneri.